The chain runs to 279 residues: MNHAVTIKSFVSTSPLSDLERGAVDKSKVAESFSAAAATYDLLAGMQKEVGESLVSLSREGCPQDIIDVGCGTGWLTHRLKNSFPEARLCAYDLSPGMIEYALAHHDNVAEIWAVADMESLPVANASQDLVFSNMAMQWLDDPRAWFAEASRVLRPGGRLICSTLLTQTLFELEQAWHGVDGGRHVNRFLSAEQVAEAAVSCGLRGECRESLYVRFHDSALDVMKELKGIGAHNIQSERPQGLTGKRRLRRVIENYEKCRQEQGVPATYHVGVCVYSRI.

It belongs to the methyltransferase superfamily.

The catalysed reaction is malonyl-[ACP] + S-adenosyl-L-methionine = malonyl-[ACP] methyl ester + S-adenosyl-L-homocysteine. It participates in cofactor biosynthesis; biotin biosynthesis. Converts the free carboxyl group of a malonyl-thioester to its methyl ester by transfer of a methyl group from S-adenosyl-L-methionine (SAM). It allows to synthesize pimeloyl-ACP via the fatty acid synthetic pathway. The chain is Malonyl-[acyl-carrier protein] O-methyltransferase from Hahella chejuensis (strain KCTC 2396).